The sequence spans 263 residues: Small ribosomal subunit protein eS4 (263 aa).

The region spanning 42 to 104 (LPLIIFLRNR…TGEHFRLVYD (63 aa)) is the S4 RNA-binding domain.

Belongs to the eukaryotic ribosomal protein eS4 family. In terms of assembly, component of the small ribosomal subunit.

The protein localises to the cytoplasm. Component of the small ribosomal subunit. The ribosome is a large ribonucleoprotein complex responsible for the synthesis of proteins in the cell. The chain is Small ribosomal subunit protein eS4 (rps4) from Xenopus laevis (African clawed frog).